Reading from the N-terminus, the 130-residue chain is MFNCLTKLVILVCLKYVAKALLNRSTGLIMKDKPEGVHHIKSCSDSSSRIWYSLWMNIAFCGGLGPTSIFDPCFLTSSAPSPPSAPALAIPAAAPPLPTSVPAGAGVEAGAGAETVSSSLMIFSSFFLYN.

An N-terminal signal peptide occupies residues 1–20 (MFNCLTKLVILVCLKYVAKA).

This is an uncharacterized protein from Saccharomyces cerevisiae (strain ATCC 204508 / S288c) (Baker's yeast).